The sequence spans 661 residues: 1-deoxy-D-xylulose-5-phosphate synthase (661 aa).

Residues His98 and 139–141 contribute to the thiamine diphosphate site; that span reads AHS. Asp170 is a Mg(2+) binding site. Thiamine diphosphate contacts are provided by residues 171–172, Asn199, Tyr309, and Glu391; that span reads GA. Residue Asn199 coordinates Mg(2+).

The protein belongs to the transketolase family. DXPS subfamily. In terms of assembly, homodimer. It depends on Mg(2+) as a cofactor. Requires thiamine diphosphate as cofactor.

It catalyses the reaction D-glyceraldehyde 3-phosphate + pyruvate + H(+) = 1-deoxy-D-xylulose 5-phosphate + CO2. Its pathway is metabolic intermediate biosynthesis; 1-deoxy-D-xylulose 5-phosphate biosynthesis; 1-deoxy-D-xylulose 5-phosphate from D-glyceraldehyde 3-phosphate and pyruvate: step 1/1. Functionally, catalyzes the acyloin condensation reaction between C atoms 2 and 3 of pyruvate and glyceraldehyde 3-phosphate to yield 1-deoxy-D-xylulose-5-phosphate (DXP). This chain is 1-deoxy-D-xylulose-5-phosphate synthase, found in Bradyrhizobium diazoefficiens (strain JCM 10833 / BCRC 13528 / IAM 13628 / NBRC 14792 / USDA 110).